A 463-amino-acid polypeptide reads, in one-letter code: Nucleobindin-1 (463 aa).

A signal peptide spans 1 to 26; it reads MPPSGPQGTLLLLPLLLLLLLRAVLA. The residue at position 86 (Ser-86) is a Phosphoserine. A Phosphothreonine modification is found at Thr-148. Positions 150 to 218 form a coiled coil; that stretch reads EARDLELLIQ…QQRRHREHPK (69 aa). The DNA-binding element occupies 172 to 218; that stretch reads HHEEFKRYEMLKEHERRRYLESLGEEQRKEAERRLEEQQRRHREHPK. Residues 193 to 210 are compositionally biased toward basic and acidic residues; that stretch reads SLGEEQRKEAERRLEEQQ. The segment at 193–221 is disordered; it reads SLGEEQRKEAERRLEEQQRRHREHPKVNV. Positions 228-321 are binds to GNAI2 and GNAI3; sequence LKEVWEELDG…VTLGEFLAST (94 aa). EF-hand domains are found at residues 240–275 and 292–327; these read PNRF…ELEK and ERLR…KEFG. Asp-253, Asn-255, Asp-257, Glu-264, Asp-305, Asn-307, Asp-309, and Glu-316 together coordinate Ca(2+). A GBA motif is present at residues 303–333; sequence NVDTNQDRLVTLGEFLASTQRKEFGDTGEGW. Residues 341–409 are a coiled coil; that stretch reads AYTEEELRRF…KQQQQQQQQQ (69 aa). A disordered region spans residues 368–463; the sequence is LSQETEALGR…LPEVEVPQHL (96 aa). Ser-369 bears the Phosphoserine mark. Basic and acidic residues predominate over residues 439–463; the sequence is DQKEVDTSEKKLLERLPEVEVPQHL.

It belongs to the nucleobindin family. In terms of assembly, interacts (via GBA motif) with guanine nucleotide-binding protein G(i) alpha subunits GNAI1, GNAI2 and GNAI3 with higher affinity for GNAI1 and GNAI3 than for GNAI2. Preferentially interacts with inactive rather than active GNAI3. Interaction with GNAI3 is inhibited when NUCB1 binds calcium, probably due to a conformational change which renders the GBA motif inaccessible.

It is found in the golgi apparatus. The protein resides in the cis-Golgi network membrane. The protein localises to the cytoplasm. It localises to the secreted. In terms of biological role, major calcium-binding protein of the Golgi which may have a role in calcium homeostasis. Acts as a non-receptor guanine nucleotide exchange factor which binds to and activates alpha subunits of guanine nucleotide-binding proteins (G proteins). This Pongo abelii (Sumatran orangutan) protein is Nucleobindin-1 (NUCB1).